The following is a 359-amino-acid chain: Membrane-bound lytic murein transglycosylase C (359 aa).

A signal peptide spans 1–16; sequence MKKYLALALIAPLLIS. The N-palmitoyl cysteine moiety is linked to residue cysteine 17. Cysteine 17 carries the S-diacylglycerol cysteine lipid modification.

The protein belongs to the transglycosylase Slt family.

It is found in the cell outer membrane. The enzyme catalyses Exolytic cleavage of the (1-&gt;4)-beta-glycosidic linkage between N-acetylmuramic acid (MurNAc) and N-acetylglucosamine (GlcNAc) residues in peptidoglycan, from either the reducing or the non-reducing ends of the peptidoglycan chains, with concomitant formation of a 1,6-anhydrobond in the MurNAc residue.. In terms of biological role, murein-degrading enzyme. May play a role in recycling of muropeptides during cell elongation and/or cell division. This Escherichia coli O127:H6 (strain E2348/69 / EPEC) protein is Membrane-bound lytic murein transglycosylase C.